Consider the following 249-residue polypeptide: 2,3-bisphosphoglycerate-dependent phosphoglycerate mutase (249 aa).

Substrate is bound by residues 8–15, 21–22, Arg60, 87–90, Lys98, 114–115, and 183–184; these read RHGESIWN, TG, ERHY, RR, and GN. His9 serves as the catalytic Tele-phosphohistidine intermediate. The active-site Proton donor/acceptor is the Glu87.

This sequence belongs to the phosphoglycerate mutase family. BPG-dependent PGAM subfamily.

The enzyme catalyses (2R)-2-phosphoglycerate = (2R)-3-phosphoglycerate. Its pathway is carbohydrate degradation; glycolysis; pyruvate from D-glyceraldehyde 3-phosphate: step 3/5. Catalyzes the interconversion of 2-phosphoglycerate and 3-phosphoglycerate. This is 2,3-bisphosphoglycerate-dependent phosphoglycerate mutase from Caldanaerobacter subterraneus subsp. tengcongensis (strain DSM 15242 / JCM 11007 / NBRC 100824 / MB4) (Thermoanaerobacter tengcongensis).